A 54-amino-acid polypeptide reads, in one-letter code: UPF0391 membrane protein PFL_0093 (54 aa).

The next 2 helical transmembrane spans lie at Trp-4–Ala-24 and Gly-29–Gly-49.

It belongs to the UPF0391 family.

It localises to the cell membrane. This Pseudomonas fluorescens (strain ATCC BAA-477 / NRRL B-23932 / Pf-5) protein is UPF0391 membrane protein PFL_0093.